A 520-amino-acid chain; its full sequence is Bifunctional purine biosynthesis protein PurH (520 aa).

Residues 1-147 (MAKIGRALIS…KNNRDVTVVV (147 aa)) enclose the MGS-like domain.

This sequence belongs to the PurH family.

It carries out the reaction (6R)-10-formyltetrahydrofolate + 5-amino-1-(5-phospho-beta-D-ribosyl)imidazole-4-carboxamide = 5-formamido-1-(5-phospho-D-ribosyl)imidazole-4-carboxamide + (6S)-5,6,7,8-tetrahydrofolate. It catalyses the reaction IMP + H2O = 5-formamido-1-(5-phospho-D-ribosyl)imidazole-4-carboxamide. It functions in the pathway purine metabolism; IMP biosynthesis via de novo pathway; 5-formamido-1-(5-phospho-D-ribosyl)imidazole-4-carboxamide from 5-amino-1-(5-phospho-D-ribosyl)imidazole-4-carboxamide (10-formyl THF route): step 1/1. The protein operates within purine metabolism; IMP biosynthesis via de novo pathway; IMP from 5-formamido-1-(5-phospho-D-ribosyl)imidazole-4-carboxamide: step 1/1. The protein is Bifunctional purine biosynthesis protein PurH of Citrifermentans bemidjiense (strain ATCC BAA-1014 / DSM 16622 / JCM 12645 / Bem) (Geobacter bemidjiensis).